A 370-amino-acid polypeptide reads, in one-letter code: N-acetyldiaminopimelate deacetylase (370 aa).

The active site involves Asp67. Glu126 functions as the Proton acceptor in the catalytic mechanism.

It belongs to the peptidase M20A family. N-acetyldiaminopimelate deacetylase subfamily.

The catalysed reaction is N-acetyl-(2S,6S)-2,6-diaminopimelate + H2O = (2S,6S)-2,6-diaminopimelate + acetate. It functions in the pathway amino-acid biosynthesis; L-lysine biosynthesis via DAP pathway; LL-2,6-diaminopimelate from (S)-tetrahydrodipicolinate (acetylase route): step 3/3. In terms of biological role, catalyzes the conversion of N-acetyl-diaminopimelate to diaminopimelate and acetate. In Exiguobacterium sibiricum (strain DSM 17290 / CCUG 55495 / CIP 109462 / JCM 13490 / 255-15), this protein is N-acetyldiaminopimelate deacetylase.